A 284-amino-acid chain; its full sequence is ATP synthase gamma chain (284 aa).

It belongs to the ATPase gamma chain family. As to quaternary structure, F-type ATPases have 2 components, CF(1) - the catalytic core - and CF(0) - the membrane proton channel. CF(1) has five subunits: alpha(3), beta(3), gamma(1), delta(1), epsilon(1). CF(0) has three main subunits: a, b and c.

Its subcellular location is the cell membrane. Its function is as follows. Produces ATP from ADP in the presence of a proton gradient across the membrane. The gamma chain is believed to be important in regulating ATPase activity and the flow of protons through the CF(0) complex. The chain is ATP synthase gamma chain from Pelotomaculum thermopropionicum (strain DSM 13744 / JCM 10971 / SI).